Consider the following 364-residue polypeptide: MLAVGAMEGPRQSAFLLSSPPLAALHSMAEMKTPLYPATYPPLPTGPPSSSSSSSSSSPSPPLGAHNPGGLKPPAAGGLSSLSSPPQQLSAATPHGINDILSRPSMPVASGAALPSASPSGSSSSSSSSASATSASAAAAAAAAAAAAAASSPAGLLAGLPRFSSLSPPPPPPGLYFSPSAAAVAAVGRYPKPLAELPGRAPIFWPGVMQSPPWRDARLACTPHQGSILLDKDGKRKHTRPTFSGQQIFALEKTFEQTKYLAGPERARLAYSLGMTESQVKVWFQNRRTKWRKKHAAEMATAKKKQDSETERLKGTSENEEEDDDYNKPLDPNSDDEKITQLLKKHKSSSGGLLLHASEAEGSS.

The segment at 35 to 134 (LYPATYPPLP…SSSSSASATS (100 aa)) is disordered. Low complexity-rich tracts occupy residues 48-92 (PSSS…LSAA) and 109-134 (ASGA…SATS). The segment at 101 to 268 (LSRPSMPVAS…KYLAGPERAR (168 aa)) is repressor domain. Position 189 is an asymmetric dimethylarginine (Arg189). A DNA-binding region (homeobox) is located at residues 236–295 (RKHTRPTFSGQQIFALEKTFEQTKYLAGPERARLAYSLGMTESQVKVWFQNRRTKWRKKH). The segment at 294–364 (KHAAEMATAK…LHASEAEGSS (71 aa)) is disordered. The span at 304–317 (KKQDSETERLKGTS) shows a compositional bias: basic and acidic residues. The involved in DNA-binding stretch occupies residues 306 to 364 (QDSETERLKGTSENEEEDDDYNKPLDPNSDDEKITQLLKKHKSSSGGLLLHASEAEGSS).

Pancreatic beta cells.

The protein resides in the nucleus. In terms of biological role, together with NKX2-2 and IRX3 acts to restrict the generation of motor neurons to the appropriate region of the neural tube. Belongs to the class II proteins of neuronal progenitor factors, which are induced by SHH signals. Transcription factor which binds to specific A/T-rich DNA sequences in the promoter regions of a number of genes. Involved in transcriptional regulation in islet beta cells. Binds to the insulin promoter and is involved in regulation of the insulin gene. In Mesocricetus auratus (Golden hamster), this protein is Homeobox protein Nkx-6.1 (NKX6-1).